A 257-amino-acid chain; its full sequence is Ribonuclease HII (257 aa).

One can recognise an RNase H type-2 domain in the interval 72–257 (TYIAGIDEVG…FAPIKDMIQK (186 aa)). The a divalent metal cation site is built by D78, E79, and D170.

This sequence belongs to the RNase HII family. Mn(2+) is required as a cofactor. It depends on Mg(2+) as a cofactor.

The protein localises to the cytoplasm. The catalysed reaction is Endonucleolytic cleavage to 5'-phosphomonoester.. Functionally, endonuclease that specifically degrades the RNA of RNA-DNA hybrids. This is Ribonuclease HII from Bacillus thuringiensis (strain Al Hakam).